Consider the following 119-residue polypeptide: Large ribosomal subunit protein uL22 (119 aa).

This sequence belongs to the universal ribosomal protein uL22 family. In terms of assembly, part of the 50S ribosomal subunit.

Functionally, this protein binds specifically to 23S rRNA; its binding is stimulated by other ribosomal proteins, e.g. L4, L17, and L20. It is important during the early stages of 50S assembly. It makes multiple contacts with different domains of the 23S rRNA in the assembled 50S subunit and ribosome. The globular domain of the protein is located near the polypeptide exit tunnel on the outside of the subunit, while an extended beta-hairpin is found that lines the wall of the exit tunnel in the center of the 70S ribosome. The protein is Large ribosomal subunit protein uL22 of Chlorobium chlorochromatii (strain CaD3).